The primary structure comprises 134 residues: UPF0412 protein YaaI (134 aa).

Positions 1 to 23 (MKSVFTLSASLAISLMLCCTAQA) are cleaved as a signal peptide.

This sequence belongs to the UPF0412 family.

The chain is UPF0412 protein YaaI from Escherichia coli O17:K52:H18 (strain UMN026 / ExPEC).